The primary structure comprises 428 residues: 3-phosphoshikimate 1-carboxyvinyltransferase (428 aa).

Residues Lys22, Ser23, and Arg27 each contribute to the 3-phosphoshikimate site. Lys22 is a phosphoenolpyruvate binding site. The phosphoenolpyruvate site is built by Gly94 and Arg122. 4 residues coordinate 3-phosphoshikimate: Ser167, Gln169, Asp314, and Lys341. Residue Gln169 participates in phosphoenolpyruvate binding. Asp314 (proton acceptor) is an active-site residue. Residues Arg345 and Arg387 each contribute to the phosphoenolpyruvate site.

It belongs to the EPSP synthase family. In terms of assembly, monomer.

It is found in the cytoplasm. It carries out the reaction 3-phosphoshikimate + phosphoenolpyruvate = 5-O-(1-carboxyvinyl)-3-phosphoshikimate + phosphate. It participates in metabolic intermediate biosynthesis; chorismate biosynthesis; chorismate from D-erythrose 4-phosphate and phosphoenolpyruvate: step 6/7. Functionally, catalyzes the transfer of the enolpyruvyl moiety of phosphoenolpyruvate (PEP) to the 5-hydroxyl of shikimate-3-phosphate (S3P) to produce enolpyruvyl shikimate-3-phosphate and inorganic phosphate. The protein is 3-phosphoshikimate 1-carboxyvinyltransferase of Geotalea uraniireducens (strain Rf4) (Geobacter uraniireducens).